The following is a 54-amino-acid chain: Relaxin (54 aa).

Q1 bears the Pyrrolidone carboxylic acid mark. 3 cysteine pairs are disulfide-bonded: C10–C41, C22–C54, and C40–C45.

This sequence belongs to the insulin family. Heterodimer of a B chain and an A chain linked by two disulfide bonds.

It localises to the secreted. In terms of biological role, relaxin is an ovarian hormone that acts with estrogen to produce dilatation of the birth canal in many mammals. The polypeptide is Relaxin (Balaenoptera edeni (Pigmy Bryde's whale)).